Consider the following 353-residue polypeptide: Photosystem II protein D1 (353 aa).

Thr-2 carries the N-acetylthreonine modification. Phosphothreonine is present on Thr-2. 3 consecutive transmembrane segments (helical) span residues 29–46 (YIGW…TATS), 118–133 (HFLL…EWEL), and 142–156 (WIAV…AATA). His-118 contributes to the chlorophyll a binding site. Tyr-126 serves as a coordination point for pheophytin a. Residues Asp-170 and Glu-189 each coordinate [CaMn4O5] cluster. The chain crosses the membrane as a helical span at residues 197-218 (FHMLGVAGVFGGSLFSAMHGSL). Position 198 (His-198) interacts with chlorophyll a. Residues His-215 and 264 to 265 (SF) each bind a quinone. His-215 contributes to the Fe cation binding site. His-272 lines the Fe cation pocket. A helical transmembrane segment spans residues 274–288 (FLAAWPVVGIWFTAL). Positions 332, 333, 342, and 344 each coordinate [CaMn4O5] cluster. Positions 345-353 (AVEVPSING) are excised as a propeptide.

It belongs to the reaction center PufL/M/PsbA/D family. In terms of assembly, PSII is composed of 1 copy each of membrane proteins PsbA, PsbB, PsbC, PsbD, PsbE, PsbF, PsbH, PsbI, PsbJ, PsbK, PsbL, PsbM, PsbT, PsbX, PsbY, PsbZ, Psb30/Ycf12, at least 3 peripheral proteins of the oxygen-evolving complex and a large number of cofactors. It forms dimeric complexes. Requires The D1/D2 heterodimer binds P680, chlorophylls that are the primary electron donor of PSII, and subsequent electron acceptors. It shares a non-heme iron and each subunit binds pheophytin, quinone, additional chlorophylls, carotenoids and lipids. D1 provides most of the ligands for the Mn4-Ca-O5 cluster of the oxygen-evolving complex (OEC). There is also a Cl(-1) ion associated with D1 and D2, which is required for oxygen evolution. The PSII complex binds additional chlorophylls, carotenoids and specific lipids. as cofactor. In terms of processing, tyr-161 forms a radical intermediate that is referred to as redox-active TyrZ, YZ or Y-Z. C-terminally processed by CTPA; processing is essential to allow assembly of the oxygen-evolving complex and thus photosynthetic growth.

The protein localises to the plastid. It localises to the chloroplast thylakoid membrane. It carries out the reaction 2 a plastoquinone + 4 hnu + 2 H2O = 2 a plastoquinol + O2. In terms of biological role, photosystem II (PSII) is a light-driven water:plastoquinone oxidoreductase that uses light energy to abstract electrons from H(2)O, generating O(2) and a proton gradient subsequently used for ATP formation. It consists of a core antenna complex that captures photons, and an electron transfer chain that converts photonic excitation into a charge separation. The D1/D2 (PsbA/PsbD) reaction center heterodimer binds P680, the primary electron donor of PSII as well as several subsequent electron acceptors. This Cucumis sativus (Cucumber) protein is Photosystem II protein D1.